The sequence spans 428 residues: Serine hydroxymethyltransferase (428 aa).

120 to 122 contributes to the (6S)-5,6,7,8-tetrahydrofolate binding site; it reads GHI. Residue Lys-226 is modified to N6-(pyridoxal phosphate)lysine.

This sequence belongs to the SHMT family. As to quaternary structure, homodimer. It depends on pyridoxal 5'-phosphate as a cofactor.

The protein resides in the cytoplasm. The catalysed reaction is 5,10-methylenetetrahydromethanopterin + glycine + H2O = 5,6,7,8-tetrahydromethanopterin + L-serine. Its pathway is amino-acid biosynthesis; glycine biosynthesis; glycine from L-serine: step 1/1. In terms of biological role, catalyzes the reversible interconversion of serine and glycine with tetrahydromethanopterin (H4MPT) serving as the one-carbon carrier. Also exhibits a pteridine-independent aldolase activity toward beta-hydroxyamino acids, producing glycine and aldehydes, via a retro-aldol mechanism. In Methanopyrus kandleri (strain AV19 / DSM 6324 / JCM 9639 / NBRC 100938), this protein is Serine hydroxymethyltransferase.